Here is a 239-residue protein sequence, read N- to C-terminus: Small ribosomal subunit protein uS3c (239 aa).

Residues 43 to 139 enclose the KH type-2 domain; it reads IKNYIQKNRK…RLNISIEKVK (97 aa). A disordered region spans residues 50–80; it reads NRKKSSNRKLESDSSSEVITHNRKNDSGSSS.

It belongs to the universal ribosomal protein uS3 family. As to quaternary structure, part of the 30S ribosomal subunit.

Its subcellular location is the plastid. The protein localises to the chloroplast. The polypeptide is Small ribosomal subunit protein uS3c (rps3) (Lolium perenne (Perennial ryegrass)).